A 467-amino-acid polypeptide reads, in one-letter code: Fumarate hydratase class II (467 aa).

Substrate is bound by residues 98 to 100 (SGT), arginine 126, 129 to 132 (HPND), 139 to 141 (SSN), and threonine 187. The active-site Proton donor/acceptor is the histidine 188. Serine 318 is a catalytic residue. Residues serine 319 and 324–326 (KVN) each bind substrate.

This sequence belongs to the class-II fumarase/aspartase family. Fumarase subfamily. As to quaternary structure, homotetramer.

It localises to the cytoplasm. The catalysed reaction is (S)-malate = fumarate + H2O. It participates in carbohydrate metabolism; tricarboxylic acid cycle; (S)-malate from fumarate: step 1/1. With respect to regulation, inhibited by ATP, citrate and S-2,3-dicarboxyaziridine. Its function is as follows. Involved in the TCA cycle. FumC seems to be a backup enzyme for FumA under conditions of iron limitation and oxidative stress. Catalyzes the stereospecific interconversion of fumarate to L-malate. This is Fumarate hydratase class II from Escherichia coli (strain K12).